The chain runs to 654 residues: MLGFRSPIRLCKLSALGSTRLLPISRPKLFSTAVARYAADMETVNTTKRLARLRQLMQEHKIDVYIVPSEDSHQSEYIAPCDGRREFISGFSGSAGTAIVSMTKAALSTDGRYFNQASKQLDSNWELLKRGVENVPTWQEWTTEQAQGGKVVGVDPALITASGARSLEETLKRNGSSLVGISQNLVDLVWGKDRPAPPREKVRVHPDKFSGKTFQEKIADLRKELEKKKTAGFVISMLDEIAWLFNLRGSDIPYNPVFFAYAIITPTKAELYIDDDKITPEVVAHLGQDVVIKPYNSIFADAKALSEARRKEAGETASKFLLSNKASWALSLSLGGEEHVEETRSPIADAKAIKNEVELAGMRACHIRDGAALIEYFAWLENELVNKKTVLDEVDAADKLEQIRTKHDLFAGLSFDTISSTGPNGAVIHYKPEKGTCSIIDPDAIYLCDSGAQYLDGTTDVTRTFHFGKPTELEKKAFTLVLKGLIAIDTAVFPKGTSGFALDALARQYLWKEGLDYLHGTGHGVGSYLNVHEGPIGIGTRVQYTEVPIAPGNVISDEPGFYEDGKFGIRIENVIMAREVQTTHKFGDKPWLGFEHVTMAPIGRNLIEPSLLSDLELKWVNDYHAEVWDKTHHFFENDEFTRSWLQRETAPITK.

The Mn(2+) site is built by aspartate 449, aspartate 460, glutamate 558, and glutamate 572.

Belongs to the peptidase M24B family. It depends on Mn(2+) as a cofactor.

The catalysed reaction is Release of any N-terminal amino acid, including proline, that is linked to proline, even from a dipeptide or tripeptide.. Functionally, catalyzes the removal of a penultimate prolyl residue from the N-termini of peptides. The sequence is that of Probable Xaa-Pro aminopeptidase P (ampp) from Aspergillus fumigatus (strain CBS 144.89 / FGSC A1163 / CEA10) (Neosartorya fumigata).